Reading from the N-terminus, the 115-residue chain is Large ribosomal subunit protein bL19 (115 aa).

This sequence belongs to the bacterial ribosomal protein bL19 family.

Its function is as follows. This protein is located at the 30S-50S ribosomal subunit interface and may play a role in the structure and function of the aminoacyl-tRNA binding site. The chain is Large ribosomal subunit protein bL19 from Pectobacterium atrosepticum (strain SCRI 1043 / ATCC BAA-672) (Erwinia carotovora subsp. atroseptica).